The following is a 493-amino-acid chain: FAD-linked oxidoreductase tazL (493 aa).

The N-terminal stretch at 1–17 (MRSNTVILAALPLVASA) is a signal peptide. N-linked (GlcNAc...) asparagine glycosylation is found at N29, N41, N53, N91, N253, N318, and N387. Residues 63 to 235 (WAEPTFAVTI…TSATYEIFDA (173 aa)) form the FAD-binding PCMH-type domain.

The protein belongs to the oxygen-dependent FAD-linked oxidoreductase family.

Its pathway is secondary metabolite biosynthesis. Functionally, FAD-linked oxidoreductase; part of the gene cluster that mediates the biosynthesis of azaterrilone A and other azaphilones, a class of fungal metabolites characterized by a highly oxygenated pyrano-quinone bicyclic core and exhibiting a broad range of bioactivities. The first step of the pathway begins with the non-reducing polyketide synthase tazA that assembles one acetyl-CoA starter unit, five malonyl-CoA units, and catalyzes a series of Claisen condensations, methylation, PT-mediated cyclization, and finally releases the first hexaketide precursor through the R-domain. The tazA product then undergoes reduction on its terminal ketone and the following pyran-ring formation by yet undetermined enzyme(s). Dehydration and enoyl reduction, possibly involving the trans-enoyl reductase tazE leads to the next intermediate. TazD is predicted as an acetyltransferase and might catalyze the acetylation steps leading to the synthesis of azaterrilone A. Azaterrilone A is not the final product of the taz pathway and both the highly reducing polyketide synthase tazB and the dual enzyme tazHJ catalyze late steps of the pathway, leading to the production of the 2 final stereoisomers that contain additional polyketide modification whose structures have still to be determined. The protein is FAD-linked oxidoreductase tazL of Aspergillus terreus (strain NIH 2624 / FGSC A1156).